A 353-amino-acid chain; its full sequence is MLISQRPTLTEEVIADNRSKFVIEPLEPGFGYTLGNSLRRTLLSSIPGAAVTSIRIDGVLHEFTTVPGVKEDVTDIILNLKGLVVSSEEDEPVTMYVRKQGPGAVTAGDIVPPAGVTVNNPDLHIATLNDKGKLEIELVVERGRGYVPAVQNKASGAEIGRIPVDSIYSPVLKVTYKVEATRVEQRTDFDRLVLDVETKNSITARDALASAGKTLVELFGLARELNVEAEGIEIGPSPAEADHIASFGLPIEDLDLTVRSYNCLKREGVHTVGELVGRTESDLLDIRNFGQKSIDEVKVKLHSLGLALKDSPASFDPTTVAGYDAATGTWSDTDAGSFGDAEGTEDYAETEQL.

Residues 1–226 are alpha N-terminal domain (alpha-NTD); that stretch reads MLISQRPTLT…ELFGLARELN (226 aa). Positions 241-353 are alpha C-terminal domain (alpha-CTD); it reads ADHIASFGLP…TEDYAETEQL (113 aa). A disordered region spans residues 326–353; it reads ATGTWSDTDAGSFGDAEGTEDYAETEQL. Positions 342-353 are enriched in acidic residues; that stretch reads EGTEDYAETEQL.

It belongs to the RNA polymerase alpha chain family. As to quaternary structure, homodimer. The RNAP catalytic core consists of 2 alpha, 1 beta, 1 beta' and 1 omega subunit. When a sigma factor is associated with the core the holoenzyme is formed, which can initiate transcription.

The enzyme catalyses RNA(n) + a ribonucleoside 5'-triphosphate = RNA(n+1) + diphosphate. In terms of biological role, DNA-dependent RNA polymerase catalyzes the transcription of DNA into RNA using the four ribonucleoside triphosphates as substrates. This Rhodococcus jostii (strain RHA1) protein is DNA-directed RNA polymerase subunit alpha.